Consider the following 200-residue polypeptide: Holliday junction branch migration complex subunit RuvA (200 aa).

The segment at 1-63 is domain I; sequence MFEYLTGLIT…EDAITLFGFA (63 aa). The interval 64–142 is domain II; sequence TQAEKRLFTQ…AVQDEVQLDF (79 aa). The tract at residues 143-151 is flexible linker; that stretch reads TAPGPLGPS. Residues 151-200 form a domain III region; that stretch reads SAALQDALAALESLGYTTKQVERVQKQLEGLQGELSTNDYLSQGLKLLSR.

This sequence belongs to the RuvA family. As to quaternary structure, homotetramer. Forms an RuvA(8)-RuvB(12)-Holliday junction (HJ) complex. HJ DNA is sandwiched between 2 RuvA tetramers; dsDNA enters through RuvA and exits via RuvB. An RuvB hexamer assembles on each DNA strand where it exits the tetramer. Each RuvB hexamer is contacted by two RuvA subunits (via domain III) on 2 adjacent RuvB subunits; this complex drives branch migration. In the full resolvosome a probable DNA-RuvA(4)-RuvB(12)-RuvC(2) complex forms which resolves the HJ.

It is found in the cytoplasm. Functionally, the RuvA-RuvB-RuvC complex processes Holliday junction (HJ) DNA during genetic recombination and DNA repair, while the RuvA-RuvB complex plays an important role in the rescue of blocked DNA replication forks via replication fork reversal (RFR). RuvA specifically binds to HJ cruciform DNA, conferring on it an open structure. The RuvB hexamer acts as an ATP-dependent pump, pulling dsDNA into and through the RuvAB complex. HJ branch migration allows RuvC to scan DNA until it finds its consensus sequence, where it cleaves and resolves the cruciform DNA. The sequence is that of Holliday junction branch migration complex subunit RuvA from Limosilactobacillus fermentum (strain NBRC 3956 / LMG 18251) (Lactobacillus fermentum).